A 381-amino-acid chain; its full sequence is Creatine kinase M-type (381 aa).

The Phosphagen kinase N-terminal domain occupies 11–98 (KLNYKPEEEY…FDPIISDRHG (88 aa)). Residues 125–367 (YVLSSRVRTG…KLMVEMEKKL (243 aa)) form the Phosphagen kinase C-terminal domain. 128 to 132 (SSRVR) is an ATP binding site. Position 164 is a phosphoserine (serine 164). Position 166 is a phosphothreonine (threonine 166). The residue at position 178 (serine 178) is a Phosphoserine. Phosphothreonine is present on threonine 180. Histidine 191 is an ATP binding site. Serine 199 carries the phosphoserine modification. Arginine 236 and arginine 292 together coordinate ATP. Threonine 313 and threonine 322 each carry phosphothreonine. ATP contacts are provided by residues 320 to 325 (RGTGGV) and aspartate 335. The residue at position 372 (serine 372) is a Phosphoserine.

Belongs to the ATP:guanido phosphotransferase family. Dimer of identical or non-identical chains, which can be either B (brain type) or M (muscle type). With MM being the major form in skeletal muscle and myocardium, MB existing in myocardium, and BB existing in many tissues, especially brain.

It is found in the cytoplasm. It catalyses the reaction creatine + ATP = N-phosphocreatine + ADP + H(+). In terms of biological role, reversibly catalyzes the transfer of phosphate between ATP and various phosphogens (e.g. creatine phosphate). Creatine kinase isoenzymes play a central role in energy transduction in tissues with large, fluctuating energy demands, such as skeletal muscle, heart, brain and spermatozoa. The protein is Creatine kinase M-type (CKM) of Homo sapiens (Human).